The following is a 413-amino-acid chain: Methylaspartate ammonia-lyase (413 aa).

Q172 contributes to the (2S,3S)-3-methyl-L-aspartate binding site. Residues D238, E273, and D307 each coordinate Mg(2+). Q329 is a binding site for (2S,3S)-3-methyl-L-aspartate. The active-site Proton acceptor is the K331. (2S,3S)-3-methyl-L-aspartate contacts are provided by residues 360–361 and C361; that span reads TC.

The protein belongs to the methylaspartate ammonia-lyase family. Homodimer. It depends on Mg(2+) as a cofactor.

The enzyme catalyses (2S,3S)-3-methyl-L-aspartate = mesaconate + NH4(+). It participates in amino-acid degradation; L-glutamate degradation via mesaconate pathway; acetate and pyruvate from L-glutamate: step 2/4. With respect to regulation, inhibited by calcium ions. In terms of biological role, involved in the methylaspartate cycle. Catalyzes the formation of the alpha,beta-unsaturated bond by the reversible anti elimination of ammonia from L-threo-beta-methylaspartate (L-threo-(2S,3S)-3-methylaspartate) to give mesaconate. It can also use L-erythro-beta-methylaspartate (L-erythro-(2S,3R)-3-methylaspartate), L-aspartate, fumarate and ethylfumarate as substrates. This is Methylaspartate ammonia-lyase from Clostridium tetanomorphum.